The sequence spans 408 residues: Peptidoglycan muramidase Tse3 (408 aa).

Residues Asn181, Asp253, Gln254, Glu258, Glu375, Ser378, Arg379, Asp382, and Asn384 each coordinate Ca(2+).

As to quaternary structure, forms a heterotetramer with Tsi3 consisting of two Tse3 dimers and two Tsi3 dimers. Formation of the complex inactivates Tse3 enzymatic activity. Requires Ca(2+) as cofactor.

It is found in the host membrane. The protein localises to the secreted. It carries out the reaction Hydrolysis of (1-&gt;4)-beta-linkages between N-acetylmuramic acid and N-acetyl-D-glucosamine residues in a peptidoglycan and between N-acetyl-D-glucosamine residues in chitodextrins.. With respect to regulation, enzymatic activity depends on membrane binding. Toxin secreted by the H1 type VI (H1-T6SS) secretion system into the periplasm of recipient cells. Degrades peptidoglycan via muramidase activity thereby helping itself to compete with other bacteria. To protect itself, the bacterium synthesizes immunity protein Tsi3 that specifically interacts with and inactivates cognate toxin. This chain is Peptidoglycan muramidase Tse3, found in Pseudomonas aeruginosa (strain ATCC 15692 / DSM 22644 / CIP 104116 / JCM 14847 / LMG 12228 / 1C / PRS 101 / PAO1).